The sequence spans 707 residues: E3 ubiquitin-protein ligase Praja-2 (707 aa).

The segment covering 1 to 10 (MSQYTEKEPS) has biased composition (basic and acidic residues). 3 disordered regions span residues 1 to 23 (MSQYTEKEPSVMDQDSSKAAWPR), 75 to 120 (NTAG…PSVA), and 242 to 290 (AGDA…CVPG). Ser-2 carries the post-translational modification N-acetylserine. Polar residues predominate over residues 109–119 (LNQSTESNPSV). Basic and acidic residues predominate over residues 246 to 276 (EAVHQDGQEFQRSSEDGIVRKRRQDDTDQGR). Phosphoserine is present on residues Ser-306 and Ser-320. Residue Ser-339 is modified to Phosphoserine; by PKA. Disordered regions lie at residues 380–403 (VTPREAERHRATAENGATASGRQE) and 424–493 (EDSS…QTSL). Residues 381–391 (TPREAERHRAT) show a composition bias toward basic and acidic residues. Ser-430 is subject to Phosphoserine. Residues 465–481 (NEPELQSDSSGPEEENQ) show a composition bias toward acidic residues. Polar residues predominate over residues 482–491 (ELSLQEGEQT). The interaction with PRKAR1A, PRKAR2A and PRKAR2B stretch occupies residues 530–707 (DGNNNLEDDS…PANDNAEEAP (178 aa)). Residues 549 to 569 (WSLFDGFADGLGVAEAISYVD) are mediates interaction with TBC1D31. The segment at 633–674 (CPICCSEYIKDDIATELPCHHFFHKPCVSIWLQKSGTCPVCR) adopts an RING-type; atypical zinc-finger fold. A disordered region spans residues 686 to 707 (AAASSEPDLDASPANDNAEEAP).

As to quaternary structure, binds ubiquitin-conjugating enzymes (E2s). In vitro, interacts with the ubiquitin-conjugating enzyme, UBE2D2. The phosphorylated form interacts with PRKAR1A, PRKAR2A and PRKAR2B. Binds the catalytic subunits of cAMP-dependent protein kinase. Interacts with MFHAS1. Interacts with TBC1D31; the interaction is direct and recruits PJA2 to centrosomes. In terms of tissue distribution, highly expressed in the brain, in nerve cells but not in glial cells. Abundantly expressed in pyramidal neurons and in the CA3 region of apical dendrites. Colocalizes with PRKAR2B in dentate granule cells and at postsynaptic sites of primary hippocampal neurons.

Its subcellular location is the cytoplasm. It localises to the cell membrane. The protein localises to the endoplasmic reticulum membrane. It is found in the golgi apparatus membrane. The protein resides in the synapse. Its subcellular location is the postsynaptic density. It localises to the cytoskeleton. The protein localises to the microtubule organizing center. It is found in the centrosome. It catalyses the reaction S-ubiquitinyl-[E2 ubiquitin-conjugating enzyme]-L-cysteine + [acceptor protein]-L-lysine = [E2 ubiquitin-conjugating enzyme]-L-cysteine + N(6)-ubiquitinyl-[acceptor protein]-L-lysine.. Its pathway is protein modification; protein ubiquitination. Its function is as follows. Has E2-dependent E3 ubiquitin-protein ligase activity. Responsible for ubiquitination of cAMP-dependent protein kinase type I and type II-alpha/beta regulatory subunits and for targeting them for proteasomal degradation. Essential for PKA-mediated long-term memory processes. Through the ubiquitination of MFHAS1, positively regulates the TLR2 signaling pathway that leads to the activation of the downstream p38 and JNK MAP kinases and promotes the polarization of macrophages toward the pro-inflammatory M1 phenotype. Plays a role in ciliogenesis by ubiquitinating OFD1. The polypeptide is E3 ubiquitin-protein ligase Praja-2 (Pja2) (Rattus norvegicus (Rat)).